A 336-amino-acid chain; its full sequence is Probable allantoicase (336 aa).

The protein belongs to the allantoicase family.

The catalysed reaction is allantoate + H2O = (S)-ureidoglycolate + urea. It participates in nitrogen metabolism; (S)-allantoin degradation; (S)-ureidoglycolate from allantoate (aminidohydrolase route): step 1/1. The sequence is that of Probable allantoicase from Acinetobacter baumannii (strain AYE).